Here is a 130-residue protein sequence, read N- to C-terminus: Methylglyoxal synthase (130 aa).

The MGS-like domain occupies 1–130 (MSKPRIALIA…DLARNMQDVC (130 aa)). Substrate is bound by residues His-11, Lys-15, 37 to 40 (TGTT), and 57 to 58 (SG). The active-site Proton donor/acceptor is Asp-63. His-90 lines the substrate pocket.

It belongs to the methylglyoxal synthase family.

It catalyses the reaction dihydroxyacetone phosphate = methylglyoxal + phosphate. Functionally, catalyzes the formation of methylglyoxal from dihydroxyacetone phosphate. This chain is Methylglyoxal synthase, found in Burkholderia ambifaria (strain MC40-6).